A 37-amino-acid chain; its full sequence is Large ribosomal subunit protein bL36 (37 aa).

This sequence belongs to the bacterial ribosomal protein bL36 family.

This Nitrosococcus oceani (strain ATCC 19707 / BCRC 17464 / JCM 30415 / NCIMB 11848 / C-107) protein is Large ribosomal subunit protein bL36.